Reading from the N-terminus, the 310-residue chain is Glutaminase (310 aa).

Substrate contacts are provided by S66, N117, E161, N168, Y192, Y244, and V262. The residue at position 294 (K294) is an N6-acetyllysine.

Belongs to the glutaminase family. In terms of assembly, homotetramer.

The enzyme catalyses L-glutamine + H2O = L-glutamate + NH4(+). In Escherichia coli O81 (strain ED1a), this protein is Glutaminase.